The following is a 93-amino-acid chain: Small ribosomal subunit protein uS15 (93 aa).

This sequence belongs to the universal ribosomal protein uS15 family. In terms of assembly, part of the 30S ribosomal subunit. Forms a bridge to the 50S subunit in the 70S ribosome, contacting the 23S rRNA.

Functionally, one of the primary rRNA binding proteins, it binds directly to 16S rRNA where it helps nucleate assembly of the platform of the 30S subunit by binding and bridging several RNA helices of the 16S rRNA. Forms an intersubunit bridge (bridge B4) with the 23S rRNA of the 50S subunit in the ribosome. The polypeptide is Small ribosomal subunit protein uS15 (Ehrlichia ruminantium (strain Gardel)).